Reading from the N-terminus, the 341-residue chain is MVANPGGGSTDAGGGPVRHIPVLLDEVLAALAPAPGKFILDGTFGAGGYSSAILAAGAEVIALDRDPTAIAAGQAMVAAHGGRLRLVHSQFSHLADHAPQGGLDGVVLDIGVSSMQIDEAERGFSFQKNGPLDMRMSAEGVSAADVVNRAKVADLIRIFHFLGEESQAPRIAHAIEKRRAEKPFETTRDLAGLIELVTPRKMKDKIHPATRVFQALRIFVNDELGELAQALFAAETALKPGGRLVVVTFHSLEDRIVKKFFSDRAGKASGSRHLPVAHERAATFEAVGKPMVSASEAEAEINPRARSAKLRAGLRTYAAAEAADMSLFGFPNLASLGKLGG.

Residues Gly47 to Tyr49, Asp64, Phe91, Asp109, and Gln116 each bind S-adenosyl-L-methionine.

The protein belongs to the methyltransferase superfamily. RsmH family.

It is found in the cytoplasm. The catalysed reaction is cytidine(1402) in 16S rRNA + S-adenosyl-L-methionine = N(4)-methylcytidine(1402) in 16S rRNA + S-adenosyl-L-homocysteine + H(+). Functionally, specifically methylates the N4 position of cytidine in position 1402 (C1402) of 16S rRNA. The polypeptide is Ribosomal RNA small subunit methyltransferase H (Rhizobium johnstonii (strain DSM 114642 / LMG 32736 / 3841) (Rhizobium leguminosarum bv. viciae)).